The following is a 269-amino-acid chain: MGQKINPHGFRLGVTTDHKTRWYAEKQYAELVGEDVKIREWLHKNLERAGLSSIEIERRSERVTIFLYAARPGIVIGRNGAEAERVRGELEKLTGKQIQLNILEVKSPETDAQLVAQGIAEQLAARVAFRRAMRKAQQSAMNAGALGIRIKCSGRLGGAEMSRSEGYREGRVPLHTLRADIDYGFFEARTTFGRIGVKVWIYKGDVTGTRAERAAQKAARQAAQGGRGGRGGNRRGRGDRPDRRGGRRRAEAAKQSAETPAPQTENAGA.

The KH type-2 domain maps to 38–106 (IREWLHKNLE…QIQLNILEVK (69 aa)). The interval 215-269 (AQKAARQAAQGGRGGRGGNRRGRGDRPDRRGGRRRAEAAKQSAETPAPQTENAGA) is disordered. A compositionally biased stretch (basic and acidic residues) spans 236–252 (GRGDRPDRRGGRRRAEA). Polar residues predominate over residues 256–269 (SAETPAPQTENAGA).

This sequence belongs to the universal ribosomal protein uS3 family. Part of the 30S ribosomal subunit. Forms a tight complex with proteins S10 and S14.

Its function is as follows. Binds the lower part of the 30S subunit head. Binds mRNA in the 70S ribosome, positioning it for translation. The sequence is that of Small ribosomal subunit protein uS3 from Cutibacterium acnes (strain DSM 16379 / KPA171202) (Propionibacterium acnes).